The following is a 181-amino-acid chain: Protein Syd (181 aa).

The protein belongs to the Syd family.

It localises to the cell inner membrane. Its function is as follows. Interacts with the SecY protein in vivo. May bind preferentially to an uncomplexed state of SecY, thus functioning either as a chelating agent for excess SecY in the cell or as a regulatory factor that negatively controls the translocase function. This Cronobacter sakazakii (strain ATCC BAA-894) (Enterobacter sakazakii) protein is Protein Syd.